A 336-amino-acid chain; its full sequence is Nucleoid-associated protein ECA2747 (336 aa).

The tract at residues 317 to 336 is disordered; it reads KGTPPNLRDQLQRRTSGGKQ.

Belongs to the YejK family.

It localises to the cytoplasm. It is found in the nucleoid. In Pectobacterium atrosepticum (strain SCRI 1043 / ATCC BAA-672) (Erwinia carotovora subsp. atroseptica), this protein is Nucleoid-associated protein ECA2747.